The primary structure comprises 353 residues: Guanine nucleotide-binding protein G(q) subunit alpha (353 aa).

S-palmitoyl cysteine attachment occurs at residues cysteine 3 and cysteine 4. Positions 32 to 353 (RELKLLLLGT…QLNLKEYNLV (322 aa)) constitute a G-alpha domain. The interval 35–48 (KLLLLGTGESGKST) is G1 motif. GTP is bound by residues 40-47 (GTGESGKS), 174-180 (LRVRVPT), 199-203 (DVGGQ), 268-271 (NKKD), and alanine 325. Residues serine 47 and threonine 180 each coordinate Mg(2+). The tract at residues 172 to 180 (DILRVRVPT) is G2 motif. The G3 motif stretch occupies residues 195–204 (FRMVDVGGQR). A G4 motif region spans residues 264 to 271 (ILFLNKKD). The tract at residues 323-328 (TCATDT) is G5 motif.

Belongs to the G-alpha family. G(q) subfamily. G proteins are composed of 3 units; alpha, beta and gamma. The alpha chain contains the guanine nucleotide binding site.

Functionally, guanine nucleotide-binding proteins (G proteins) are involved as modulators or transducers in various transmembrane signaling systems. The sequence is that of Guanine nucleotide-binding protein G(q) subunit alpha (SCGQA) from Mizuhopecten yessoensis (Japanese scallop).